We begin with the raw amino-acid sequence, 264 residues long: Acyl-[acyl-carrier-protein]--UDP-N-acetylglucosamine O-acyltransferase (264 aa).

The protein belongs to the transferase hexapeptide repeat family. LpxA subfamily. As to quaternary structure, homotrimer.

It localises to the cytoplasm. It carries out the reaction a (3R)-hydroxyacyl-[ACP] + UDP-N-acetyl-alpha-D-glucosamine = a UDP-3-O-[(3R)-3-hydroxyacyl]-N-acetyl-alpha-D-glucosamine + holo-[ACP]. The protein operates within glycolipid biosynthesis; lipid IV(A) biosynthesis; lipid IV(A) from (3R)-3-hydroxytetradecanoyl-[acyl-carrier-protein] and UDP-N-acetyl-alpha-D-glucosamine: step 1/6. In terms of biological role, involved in the biosynthesis of lipid A, a phosphorylated glycolipid that anchors the lipopolysaccharide to the outer membrane of the cell. This Leptothrix cholodnii (strain ATCC 51168 / LMG 8142 / SP-6) (Leptothrix discophora (strain SP-6)) protein is Acyl-[acyl-carrier-protein]--UDP-N-acetylglucosamine O-acyltransferase.